Here is a 31-residue protein sequence, read N- to C-terminus: MLTITSYFGFLLAALTITSALLIGLSKIRLI.

A helical transmembrane segment spans residues 4-24 (ITSYFGFLLAALTITSALLIG).

Belongs to the PetL family. In terms of assembly, the 4 large subunits of the cytochrome b6-f complex are cytochrome b6, subunit IV (17 kDa polypeptide, PetD), cytochrome f and the Rieske protein, while the 4 small subunits are PetG, PetL, PetM and PetN. The complex functions as a dimer.

Its subcellular location is the plastid. It is found in the chloroplast thylakoid membrane. Functionally, component of the cytochrome b6-f complex, which mediates electron transfer between photosystem II (PSII) and photosystem I (PSI), cyclic electron flow around PSI, and state transitions. PetL is important for photoautotrophic growth as well as for electron transfer efficiency and stability of the cytochrome b6-f complex. The sequence is that of Cytochrome b6-f complex subunit 6 from Magnolia grandiflora (Southern magnolia).